A 191-amino-acid polypeptide reads, in one-letter code: Ribosomal RNA small subunit methyltransferase G (191 aa).

S-adenosyl-L-methionine-binding positions include glycine 62, phenylalanine 67, isoleucine 111–glutamate 112, and arginine 124.

This sequence belongs to the methyltransferase superfamily. RNA methyltransferase RsmG family.

Its subcellular location is the cytoplasm. The enzyme catalyses guanosine(527) in 16S rRNA + S-adenosyl-L-methionine = N(7)-methylguanosine(527) in 16S rRNA + S-adenosyl-L-homocysteine. In terms of biological role, specifically methylates the N7 position of guanine in position 527 of 16S rRNA. This chain is Ribosomal RNA small subunit methyltransferase G, found in Rickettsia typhi (strain ATCC VR-144 / Wilmington).